A 21-amino-acid chain; its full sequence is MKHIQIRNSDMDWHIAANNLG.

In Escherichia coli (strain K12), this protein is Protein YmjD (ymjD).